The sequence spans 198 residues: Large ribosomal subunit protein bL9 (198 aa).

Belongs to the bacterial ribosomal protein bL9 family.

Binds to the 23S rRNA. This Bartonella tribocorum (strain CIP 105476 / IBS 506) protein is Large ribosomal subunit protein bL9.